We begin with the raw amino-acid sequence, 361 residues long: Ribosomal RNA large subunit methyltransferase M (361 aa).

Residues Ser187, 220–223, Asp239, Asp259, and Asp276 contribute to the S-adenosyl-L-methionine site; that span reads CPGG. Catalysis depends on Lys305, which acts as the Proton acceptor.

It belongs to the class I-like SAM-binding methyltransferase superfamily. RNA methyltransferase RlmE family. RlmM subfamily. Monomer.

It localises to the cytoplasm. The enzyme catalyses cytidine(2498) in 23S rRNA + S-adenosyl-L-methionine = 2'-O-methylcytidine(2498) in 23S rRNA + S-adenosyl-L-homocysteine + H(+). Catalyzes the 2'-O-methylation at nucleotide C2498 in 23S rRNA. The polypeptide is Ribosomal RNA large subunit methyltransferase M (Shewanella sp. (strain MR-4)).